Consider the following 472-residue polypeptide: Transmembrane protein 8B (472 aa).

Over residues methionine 1 to glutamine 10 the composition is skewed to low complexity. The interval methionine 1–glutamate 24 is disordered. Over methionine 1 to leucine 233 the chain is Extracellular. Asparagine 100 carries an N-linked (GlcNAc...) asparagine glycan. An EGF-like domain is found at phenylalanine 182 to threonine 221. 3 cysteine pairs are disulfide-bonded: cysteine 186–cysteine 196, cysteine 190–cysteine 209, and cysteine 211–cysteine 220. The helical transmembrane segment at leucine 234–isoleucine 254 threads the bilayer. Over arginine 255–arginine 257 the chain is Cytoplasmic. The chain crosses the membrane as a helical span at residues tyrosine 258 to alanine 277. At cysteine 278–aspartate 292 the chain is on the extracellular side. Residues valine 293–methionine 313 traverse the membrane as a helical segment. The Cytoplasmic segment spans residues alanine 314–arginine 315. Residues leucine 316 to leucine 336 form a helical membrane-spanning segment. The Extracellular segment spans residues glutamine 337 to glycine 342. A helical transmembrane segment spans residues leucine 343–valine 363. The Cytoplasmic portion of the chain corresponds to arginine 364–tryptophan 379. Residues leucine 380–valine 400 traverse the membrane as a helical segment. Residues glutamate 401 to asparagine 405 are Extracellular-facing. The chain crosses the membrane as a helical span at residues tyrosine 406–proline 426. Residues proline 427–serine 472 are Cytoplasmic-facing.

This sequence belongs to the TMEM8 family. May interact with EZR. N-glycosylated.

Its subcellular location is the cell membrane. It is found in the cytoplasm. The protein resides in the nucleus. It localises to the mitochondrion. The protein localises to the endoplasmic reticulum. In terms of biological role, may function as a regulator of the EGFR pathway. Probable tumor suppressor which may function in cell growth, proliferation and adhesion. The sequence is that of Transmembrane protein 8B (Tmem8b) from Mus musculus (Mouse).